The sequence spans 98 residues: Integration host factor subunit alpha (98 aa).

The interval 54-74 is disordered; sequence LRDKASRPGRNPKTGENIPVS.

Belongs to the bacterial histone-like protein family. As to quaternary structure, heterodimer of an alpha and a beta chain.

Functionally, this protein is one of the two subunits of integration host factor, a specific DNA-binding protein that functions in genetic recombination as well as in transcriptional and translational control. The protein is Integration host factor subunit alpha of Actinobacillus succinogenes (strain ATCC 55618 / DSM 22257 / CCUG 43843 / 130Z).